We begin with the raw amino-acid sequence, 460 residues long: MTVIFDQSANEKLLSEMKDAISKNKHIRSFINDIQLEMAKNKITPGTTQKLIYDIENPEVEISKEYMYFLAKSLYSVLESERFNPRNYFTETDMREIETLWEGSVEEDIKFPYTFKQVVKYSDDNYFFPITAKELFMLFENKLLHYNPNAQRTNKTKKLEGSDIEIPVPQLNKQSVEEIKELFLDGKLIKSVFTFNARVGSASCGEELKYDDDTMSLTVTEDTILDVLDGYHRLIGITMAIRQHPELDHLFEETFKVDIYNYTQKRAREHFGQQNTINPVKKSKVAEMSQNVYSNKIVKFIQDNSIIGDYIKTNGDWINQNQNLLITFSDFKKAIERSYSKKDFSTQADILKTARYLTSFFDALATQYVDEFLGDIAKERKRSFVNNYLFFNGYVGLAKKLQLDGVSLDELESKITDVLGSIDFSKKNKLWDELGVVDKNGNAKSPQKIWNFFNNLKIDE.

This Bacillus subtilis (strain 168) protein is SPbeta prophage-derived uncharacterized protein YopQ (yopQ).